The sequence spans 165 residues: SsrA-binding protein (165 aa).

The span at 135–158 (QAHDKRQDMARRDAQREVTRELGR) shows a compositional bias: basic and acidic residues. The disordered stretch occupies residues 135–165 (QAHDKRQDMARRDAQREVTRELGRRVKGMTN).

It belongs to the SmpB family.

The protein localises to the cytoplasm. In terms of biological role, required for rescue of stalled ribosomes mediated by trans-translation. Binds to transfer-messenger RNA (tmRNA), required for stable association of tmRNA with ribosomes. tmRNA and SmpB together mimic tRNA shape, replacing the anticodon stem-loop with SmpB. tmRNA is encoded by the ssrA gene; the 2 termini fold to resemble tRNA(Ala) and it encodes a 'tag peptide', a short internal open reading frame. During trans-translation Ala-aminoacylated tmRNA acts like a tRNA, entering the A-site of stalled ribosomes, displacing the stalled mRNA. The ribosome then switches to translate the ORF on the tmRNA; the nascent peptide is terminated with the 'tag peptide' encoded by the tmRNA and targeted for degradation. The ribosome is freed to recommence translation, which seems to be the essential function of trans-translation. This is SsrA-binding protein from Mycolicibacterium gilvum (strain PYR-GCK) (Mycobacterium gilvum (strain PYR-GCK)).